We begin with the raw amino-acid sequence, 336 residues long: Ferrochelatase (336 aa).

Residues histidine 206 and glutamate 287 each contribute to the Fe cation site.

Belongs to the ferrochelatase family.

The protein localises to the cytoplasm. It catalyses the reaction heme b + 2 H(+) = protoporphyrin IX + Fe(2+). Its pathway is porphyrin-containing compound metabolism; protoheme biosynthesis; protoheme from protoporphyrin-IX: step 1/1. Catalyzes the ferrous insertion into protoporphyrin IX. The sequence is that of Ferrochelatase from Neisseria meningitidis serogroup A / serotype 4A (strain DSM 15465 / Z2491).